Consider the following 256-residue polypeptide: Pimeloyl-[acyl-carrier protein] methyl ester esterase (256 aa).

The region spanning 15-242 (HLVLLHGWGL…AAHAPFISHP (228 aa)) is the AB hydrolase-1 domain. Substrate-binding positions include Trp-22, 82-83 (SL), and 143-147 (FLALQ). Ser-82 serves as the catalytic Nucleophile. Catalysis depends on residues Asp-207 and His-235. His-235 provides a ligand contact to substrate.

This sequence belongs to the AB hydrolase superfamily. Carboxylesterase BioH family. In terms of assembly, monomer.

It is found in the cytoplasm. The enzyme catalyses 6-carboxyhexanoyl-[ACP] methyl ester + H2O = 6-carboxyhexanoyl-[ACP] + methanol + H(+). It functions in the pathway cofactor biosynthesis; biotin biosynthesis. In terms of biological role, the physiological role of BioH is to remove the methyl group introduced by BioC when the pimeloyl moiety is complete. It allows to synthesize pimeloyl-ACP via the fatty acid synthetic pathway through the hydrolysis of the ester bonds of pimeloyl-ACP esters. The chain is Pimeloyl-[acyl-carrier protein] methyl ester esterase from Escherichia coli O8 (strain IAI1).